The chain runs to 369 residues: Hsc70-interacting protein (369 aa).

Residues 38–97 (MGGKVPPATQKAKSEENTKEEKPDSKKVEEDLKADEPSSEESDLEIDKEGVIEPDTDAPQ) form a disordered region. Residues 49–73 (AKSEENTKEEKPDSKKVEEDLKADE) show a composition bias toward basic and acidic residues. TPR repeat units lie at residues 114-147 (ANDK…NPRL), 148-181 (AILY…NPDS), and 182-215 (AQPY…DYDE). Residues 256–272 (KAREEHERAQREEEARR) are compositionally biased toward basic and acidic residues. Residues 256 to 300 (KAREEHERAQREEEARRQSGAQYGSFPGGFPGGMPGNFPGGMPGM) form a disordered region. The span at 281-300 (FPGGFPGGMPGNFPGGMPGM) shows a compositional bias: gly residues. An STI1 domain is found at 319–358 (DPEVLAAMQDPEVMVAFQDVAQNPANMSKYQSNPKVMNLI). The residue at position 346 (Ser-346) is a Phosphoserine; by GRK5. Lys-353 and Lys-360 each carry N6-acetyllysine.

Belongs to the FAM10 family. In terms of assembly, homotetramer. Interacts with HSC70 as well as DNAJ homologs and HSP90. Interacts (via the C-terminus 303- 319 AA) with GRK5.

Its subcellular location is the cytoplasm. One HIP oligomer binds the ATPase domains of at least two HSC70 molecules dependent on activation of the HSC70 ATPase by HSP40. Stabilizes the ADP state of HSC70 that has a high affinity for substrate protein. Through its own chaperone activity, it may contribute to the interaction of HSC70 with various target proteins. The chain is Hsc70-interacting protein (ST13) from Homo sapiens (Human).